The chain runs to 468 residues: Tapasin-related protein (468 aa).

The signal sequence occupies residues 1-18; that stretch reads MGTQEGWCLLLCLALSGA. At 19-405 the chain is on the lumenal side; sequence AETKPHPAER…STQVVPPERR (387 aa). Residues 181–297 enclose the Ig-like V-type domain; it reads PQGTVRTAVE…SLYRAQQIIQ (117 aa). Intrachain disulfides connect C212–C283 and C321–C382. N-linked (GlcNAc...) asparagine glycosylation occurs at N265. The 91-residue stretch at 304–394 folds into the Ig-like C1-type domain; sequence PKVRLSLANE…MHISLEEPLG (91 aa). Residues 406-426 traverse the membrane as a helical segment; it reads TALGVIFASSLFLLALLFLGL. The Cytoplasmic portion of the chain corresponds to 427–468; the sequence is QRRQAPTRVGLLQAERWKTTSCADTQSSHLHEDRTACVSQPS.

As to quaternary structure, interacts with peptide-free HLA-A*02-B2M complexes or those loaded with low affinity peptides, likely facilitating peptide exchange onto higher affinity peptides. Interacts with MR1 in a ligand-independent way; this interaction may stabilize MR1 pool and facilitate ligand loading and dissociation.

Its subcellular location is the cell membrane. The protein localises to the endoplasmic reticulum membrane. It is found in the microsome membrane. It localises to the golgi apparatus membrane. Its function is as follows. Component of the antigen processing and presentation pathway, which binds to MHC class I coupled with beta2-microglobulin/B2M. Association between TAPBPR and MHC class I occurs in the absence of a functional peptide-loading complex (PLC). Expression seems to slow down and down-regulate MHC class I surface expression. The chain is Tapasin-related protein (TAPBPL) from Pongo abelii (Sumatran orangutan).